Here is a 356-residue protein sequence, read N- to C-terminus: tRNA N6-adenosine threonylcarbamoyltransferase (356 aa).

Positions 115 and 119 each coordinate Fe cation. Substrate is bound by residues 138–142, Asp-171, Gly-184, and Asn-283; that span reads LVSGG. A Fe cation-binding site is contributed by Asp-311.

This sequence belongs to the KAE1 / TsaD family. The cofactor is Fe(2+).

It localises to the cytoplasm. The enzyme catalyses L-threonylcarbamoyladenylate + adenosine(37) in tRNA = N(6)-L-threonylcarbamoyladenosine(37) in tRNA + AMP + H(+). Its function is as follows. Required for the formation of a threonylcarbamoyl group on adenosine at position 37 (t(6)A37) in tRNAs that read codons beginning with adenine. Is involved in the transfer of the threonylcarbamoyl moiety of threonylcarbamoyl-AMP (TC-AMP) to the N6 group of A37, together with TsaE and TsaB. TsaD likely plays a direct catalytic role in this reaction. This is tRNA N6-adenosine threonylcarbamoyltransferase from Prochlorococcus marinus (strain AS9601).